Reading from the N-terminus, the 172-residue chain is Large ribosomal subunit protein uL10 (172 aa).

The protein belongs to the universal ribosomal protein uL10 family. As to quaternary structure, part of the ribosomal stalk of the 50S ribosomal subunit. The N-terminus interacts with L11 and the large rRNA to form the base of the stalk. The C-terminus forms an elongated spine to which L12 dimers bind in a sequential fashion forming a multimeric L10(L12)X complex.

Functionally, forms part of the ribosomal stalk, playing a central role in the interaction of the ribosome with GTP-bound translation factors. This is Large ribosomal subunit protein uL10 from Caulobacter sp. (strain K31).